We begin with the raw amino-acid sequence, 161 residues long: N5-carboxyaminoimidazole ribonucleotide mutase (161 aa).

3 residues coordinate substrate: serine 9, aspartate 12, and arginine 39.

Belongs to the AIR carboxylase family. Class I subfamily.

It catalyses the reaction 5-carboxyamino-1-(5-phospho-D-ribosyl)imidazole + H(+) = 5-amino-1-(5-phospho-D-ribosyl)imidazole-4-carboxylate. It participates in purine metabolism; IMP biosynthesis via de novo pathway; 5-amino-1-(5-phospho-D-ribosyl)imidazole-4-carboxylate from 5-amino-1-(5-phospho-D-ribosyl)imidazole (N5-CAIR route): step 2/2. Its function is as follows. Catalyzes the conversion of N5-carboxyaminoimidazole ribonucleotide (N5-CAIR) to 4-carboxy-5-aminoimidazole ribonucleotide (CAIR). In Vibrio parahaemolyticus serotype O3:K6 (strain RIMD 2210633), this protein is N5-carboxyaminoimidazole ribonucleotide mutase.